Consider the following 71-residue polypeptide: Plasticin-C1 (71 aa).

An N-terminal signal peptide occupies residues 1-22 (MAFLKKSLLLVLFLGLVSLSIC). Positions 23–45 (EEEKRENEDEEKQEDDDQSENKR) are excised as a propeptide. The segment at 25-46 (EKRENEDEEKQEDDDQSENKRG) is disordered. Acidic residues predominate over residues 30–40 (EDEEKQEDDDQ). Asparagine 68 is subject to Asparagine amide. Residues 70–71 (ES) constitute a propeptide that is removed on maturation.

Belongs to the frog skin active peptide (FSAP) family. Plasticin subfamily. As to expression, expressed by the skin glands.

The protein resides in the secreted. The protein localises to the target cell membrane. Its function is as follows. Neutral peptide with no antimicrobial activity. May act in synergy with cationic peptides by enhancing their activity. Has a moderate hemolytic activity. In Agalychnis callidryas (Red-eyed tree frog), this protein is Plasticin-C1.